Consider the following 1481-residue polypeptide: DNA-directed RNA polymerase subunit beta'' (1481 aa).

4 residues coordinate Zn(2+): Cys217, Cys291, Cys298, and Cys301.

The protein belongs to the RNA polymerase beta' chain family. RpoC2 subfamily. As to quaternary structure, in plastids the minimal PEP RNA polymerase catalytic core is composed of four subunits: alpha, beta, beta', and beta''. When a (nuclear-encoded) sigma factor is associated with the core the holoenzyme is formed, which can initiate transcription. It depends on Zn(2+) as a cofactor.

It is found in the plastid. The protein localises to the chloroplast. The enzyme catalyses RNA(n) + a ribonucleoside 5'-triphosphate = RNA(n+1) + diphosphate. DNA-dependent RNA polymerase catalyzes the transcription of DNA into RNA using the four ribonucleoside triphosphates as substrates. This chain is DNA-directed RNA polymerase subunit beta'', found in Trieres chinensis (Marine centric diatom).